Reading from the N-terminus, the 205-residue chain is Heat shock protein beta-1 (205 aa).

An Omega-N-methylarginine modification is found at Arg-12. Ser-15 is modified (phosphoserine; by MAPKAPK2 and MAPKAPK3). Phosphoserine occurs at positions 26 and 65. Positions 70-205 (APAYSRALSR…AAKSDETAAK (136 aa)) are interaction with TGFB1I1. The 109-residue stretch at 76 to 184 (ALSRQLSSGV…QSNEITIPVT (109 aa)) folds into the sHSP domain. Phosphoserine; by MAPKAPK2, MAPKAPK3 and MAPKAPK5 is present on residues Ser-78 and Ser-82. Ser-83, Ser-86, and Ser-98 each carry phosphoserine. Lys-123 is subject to N6-acetyllysine. A Phosphothreonine modification is found at Thr-174. Phosphoserine occurs at positions 176 and 199.

Belongs to the small heat shock protein (HSP20) family. Homooligomer. Homodimer; becomes monomeric upon activation. Heterooligomer; with HSPB6. Associates with alpha- and beta-tubulin. Interacts with TGFB1I1. Interacts with CRYAB. Interacts with HSPB8. Interacts with HSPBAP1. Post-translationally, phosphorylated upon exposure to protein kinase C activators and heat shock. Phosphorylation by MAPKAPK2 and MAPKAPK3 in response to stress dissociates HSPB1 from large small heat-shock protein (sHsps) oligomers and impairs its chaperone activity and ability to protect against oxidative stress effectively. Phosphorylation by MAPKAPK5 in response to PKA stimulation induces F-actin rearrangement. As to expression, detected in all tissues tested: skeletal muscle, heart, aorta, large intestine, small intestine, stomach, esophagus, bladder, adrenal gland, thyroid, pancreas, testis, adipose tissue, kidney, liver, spleen, cerebral cortex, blood serum and cerebrospinal fluid. Highest levels are found in the heart and in tissues composed of striated and smooth muscle.

Its subcellular location is the cytoplasm. The protein localises to the nucleus. The protein resides in the cytoskeleton. It is found in the spindle. Its function is as follows. Small heat shock protein which functions as a molecular chaperone probably maintaining denatured proteins in a folding-competent state. Plays a role in stress resistance and actin organization. Through its molecular chaperone activity may regulate numerous biological processes including the phosphorylation and the axonal transport of neurofilament proteins. The chain is Heat shock protein beta-1 (HSPB1) from Homo sapiens (Human).